Here is a 446-residue protein sequence, read N- to C-terminus: Minor fimbrium tip subunit Mfa3 (446 aa).

Positions 1–20 are cleaved as a signal peptide; the sequence is MMQLKKRYFALILLLFLWSG. The N-palmitoyl cysteine moiety is linked to residue Cys-21. Cys-21 carries the S-diacylglycerol cysteine lipid modification. Positions 21-43 are excised as a propeptide; it reads CDRGVDPQPDPLQPDVYLLVNAR.

This sequence belongs to the bacteroidetes fimbrillin superfamily. FimB/Mfa2 family. In terms of assembly, component of the fimbrium tip. Minor fimbriae are composed of a structural subunit, most often Mfa1, and the accessory subunits Mfa3, Mfa4 and Mfa5. Fimbrium assembly occurs by linear, head-to-tail oligomerization of fimbrial subunits. This is mediated via insertion of a C-terminal beta-strand from one subunit into a groove in the N-terminal domain of the following subunit. Mfa3 is required for Mfa4 and Mfa5 insertion into the fimbrium.

It is found in the fimbrium. The protein resides in the cell outer membrane. Tip subunit of the minor fimbriae. These filamentous pili are attached to the cell surface; they mediate biofilm formation, adhesion onto host cells and onto other bacteria that are part of the oral microbiome. They play an important role in invasion of periodontal tissues and are recognized as major virulence factors. Fimbrium subunits from different strains have highly divergent sequences, and this correlates with pathogenicity. This Porphyromonas gingivalis (strain ATCC 33277 / DSM 20709 / CIP 103683 / JCM 12257 / NCTC 11834 / 2561) protein is Minor fimbrium tip subunit Mfa3 (mfa3).